A 458-amino-acid chain; its full sequence is tRNA(Ile)-lysidine synthase (458 aa).

Ser-35 to Ser-40 contributes to the ATP binding site.

This sequence belongs to the tRNA(Ile)-lysidine synthase family.

The protein resides in the cytoplasm. The catalysed reaction is cytidine(34) in tRNA(Ile2) + L-lysine + ATP = lysidine(34) in tRNA(Ile2) + AMP + diphosphate + H(+). Functionally, ligates lysine onto the cytidine present at position 34 of the AUA codon-specific tRNA(Ile) that contains the anticodon CAU, in an ATP-dependent manner. Cytidine is converted to lysidine, thus changing the amino acid specificity of the tRNA from methionine to isoleucine. The sequence is that of tRNA(Ile)-lysidine synthase from Nitrosomonas europaea (strain ATCC 19718 / CIP 103999 / KCTC 2705 / NBRC 14298).